We begin with the raw amino-acid sequence, 751 residues long: Transposable element P transposase (751 aa).

Residues Met-1 to Val-77 form a THAP-type zinc finger.

Its function is as follows. P-element transposase that specifically mediates transposition of P-elements. Mediates both; precise and imprecise excision. The protein is Transposable element P transposase of Drosophila melanogaster (Fruit fly).